The sequence spans 337 residues: Glycerol-3-phosphate dehydrogenase [NAD(P)+] (337 aa).

NADPH contacts are provided by serine 12, tryptophan 13, and lysine 110. 3 residues coordinate sn-glycerol 3-phosphate: lysine 110, glycine 141, and serine 143. NADPH is bound at residue alanine 145. Sn-glycerol 3-phosphate-binding residues include lysine 196, aspartate 249, serine 259, arginine 260, and asparagine 261. The Proton acceptor role is filled by lysine 196. Arginine 260 is a binding site for NADPH. Residues valine 284 and glutamate 286 each contribute to the NADPH site.

It belongs to the NAD-dependent glycerol-3-phosphate dehydrogenase family.

The protein resides in the cytoplasm. The catalysed reaction is sn-glycerol 3-phosphate + NAD(+) = dihydroxyacetone phosphate + NADH + H(+). It catalyses the reaction sn-glycerol 3-phosphate + NADP(+) = dihydroxyacetone phosphate + NADPH + H(+). Its pathway is membrane lipid metabolism; glycerophospholipid metabolism. Catalyzes the reduction of the glycolytic intermediate dihydroxyacetone phosphate (DHAP) to sn-glycerol 3-phosphate (G3P), the key precursor for phospholipid synthesis. The protein is Glycerol-3-phosphate dehydrogenase [NAD(P)+] of Levilactobacillus brevis (strain ATCC 367 / BCRC 12310 / CIP 105137 / JCM 1170 / LMG 11437 / NCIMB 947 / NCTC 947) (Lactobacillus brevis).